Consider the following 387-residue polypeptide: (S)-8-oxocitronellyl enol synthase (387 aa).

Residues 36–38, 64–65, 82–83, 106–107, and Gln-140 contribute to the NADP(+) site; these read TGI, RR, DI, and SW. Active-site residues include Lys-144 and Tyr-177. The substrate site is built by Lys-144 and Tyr-177. NADP(+) is bound by residues Tyr-177 and 211–213; that span reads SMM.

It belongs to the short-chain dehydrogenases/reductases (SDR) family. Highly divergent. Expressed in leaves.

The catalysed reaction is (S)-8-oxocitronellyl enol + NADP(+) = (6E)-8-oxogeranial + NADPH + H(+). It carries out the reaction (S)-8-oxocitronellyl enol + NAD(+) = (6E)-8-oxogeranial + NADH + H(+). It catalyses the reaction (R)-8-oxocitronellyl enol + NADP(+) = (6E)-8-oxogeranial + NADPH + H(+). In terms of biological role, iridoid synthase that catalyzes the first step in generation of the iridoid ring scaffold using the linear monoterpene (6E)-8-oxogeranial as substrate. Reduces 8-oxogeranial, generating an unstable product that is subsequently cyclized into several possible products, either non-enzymically or by dedicated cyclases. Iridoids comprise a large family of distinctive bicyclic monoterpenes that possess a wide range of pharmacological activities, including anticancer, anti-inflammatory, antifungal and antibacterial activities. This Antirrhinum majus (Garden snapdragon) protein is (S)-8-oxocitronellyl enol synthase.